The following is a 141-amino-acid chain: Putative nickel-responsive regulator (141 aa).

Residues His80, His91, His93, and Cys99 each coordinate Ni(2+).

This sequence belongs to the transcriptional regulatory CopG/NikR family. Homotetramer. Requires Ni(2+) as cofactor.

Transcriptional regulator. The protein is Putative nickel-responsive regulator of Methanocaldococcus jannaschii (strain ATCC 43067 / DSM 2661 / JAL-1 / JCM 10045 / NBRC 100440) (Methanococcus jannaschii).